The sequence spans 210 residues: ATP-dependent Clp protease proteolytic subunit (210 aa).

S107 functions as the Nucleophile in the catalytic mechanism. H132 is a catalytic residue.

Belongs to the peptidase S14 family. As to quaternary structure, fourteen ClpP subunits assemble into 2 heptameric rings which stack back to back to give a disk-like structure with a central cavity, resembling the structure of eukaryotic proteasomes.

It is found in the cytoplasm. The catalysed reaction is Hydrolysis of proteins to small peptides in the presence of ATP and magnesium. alpha-casein is the usual test substrate. In the absence of ATP, only oligopeptides shorter than five residues are hydrolyzed (such as succinyl-Leu-Tyr-|-NHMec, and Leu-Tyr-Leu-|-Tyr-Trp, in which cleavage of the -Tyr-|-Leu- and -Tyr-|-Trp bonds also occurs).. Its function is as follows. Cleaves peptides in various proteins in a process that requires ATP hydrolysis. Has a chymotrypsin-like activity. Plays a major role in the degradation of misfolded proteins. The sequence is that of ATP-dependent Clp protease proteolytic subunit from Azorhizobium caulinodans (strain ATCC 43989 / DSM 5975 / JCM 20966 / LMG 6465 / NBRC 14845 / NCIMB 13405 / ORS 571).